A 359-amino-acid chain; its full sequence is Histidinol-phosphate aminotransferase (359 aa).

Lysine 212 is subject to N6-(pyridoxal phosphate)lysine.

It belongs to the class-II pyridoxal-phosphate-dependent aminotransferase family. Histidinol-phosphate aminotransferase subfamily. As to quaternary structure, homodimer. Pyridoxal 5'-phosphate serves as cofactor.

It carries out the reaction L-histidinol phosphate + 2-oxoglutarate = 3-(imidazol-4-yl)-2-oxopropyl phosphate + L-glutamate. The protein operates within amino-acid biosynthesis; L-histidine biosynthesis; L-histidine from 5-phospho-alpha-D-ribose 1-diphosphate: step 7/9. The protein is Histidinol-phosphate aminotransferase of Buchnera aphidicola subsp. Schlechtendalia chinensis.